A 272-amino-acid polypeptide reads, in one-letter code: Putative phosphatase HI_0597 (272 aa).

Residue Asp-11 is the Nucleophile of the active site. Mg(2+) is bound at residue Asp-11. Position 12 (Leu-12) interacts with phosphate. Position 13 (Asp-13) interacts with Mg(2+). Phosphate contacts are provided by residues 45–46 (TG) and Lys-195. Asp-218 contributes to the Mg(2+) binding site. Asn-221 is a phosphate binding site.

Belongs to the HAD-like hydrolase superfamily. Cof family. Requires Mg(2+) as cofactor.

The sequence is that of Putative phosphatase HI_0597 from Haemophilus influenzae (strain ATCC 51907 / DSM 11121 / KW20 / Rd).